The chain runs to 370 residues: Platelet-derived growth factor D (370 aa).

Residues 1-18 (MHRLIFVYTLICANFCSC) form the signal peptide. Residues 52–170 (RDETIQVKGN…PGFKIYYSLL (119 aa)) enclose the CUB domain. An intrachain disulfide couples Cys109 to Cys131. N-linked (GlcNAc...) asparagine glycosylation is present at Asn276. Disulfide bonds link Cys302/Cys360 and Cys306/Cys362.

Belongs to the PDGF/VEGF growth factor family. Homodimer; disulfide-linked. Interacts with PDGFRB homodimers, and with heterodimers formed by PDGFRA and PDGFRB. Post-translationally, activated by proteolytic cleavage. Proteolytic removal of the N-terminal CUB domain releasing the core domain is necessary for unmasking the receptor-binding epitopes of the core domain. Cleavage after Arg-247 or Arg-249 by urokinase plasminogen activator gives rise to the active form. Expressed at high levels in the heart, pancreas, adrenal gland and ovary and at low levels in placenta, liver, kidney, prostate, testis, small intestine, spleen and colon. In the kidney, expressed by the visceral epithelial cells of the glomeruli. A widespread expression is also seen in the medial smooth muscle cells of arteries and arterioles, as well as in smooth muscle cells of vasa rectae in the medullary area. Expressed in the adventitial connective tissue surrounding the suprarenal artery. In chronic obstructive nephropathy, a persistent expression is seen in glomerular visceral epithelial cells and vascular smooth muscle cells, as well as de novo expression by periglomerular interstitial cells and by some neointimal cells of atherosclerotic vessels. Expression in normal prostate is seen preferentially in the mesenchyme of the gland while expression is increased and more profuse in prostate carcinoma. Expressed in many ovarian, lung, renal and brain cancer-derived cell lines.

It localises to the secreted. In terms of biological role, growth factor that plays an essential role in the regulation of embryonic development, cell proliferation, cell migration, survival and chemotaxis. Potent mitogen for cells of mesenchymal origin. Plays an important role in wound healing. Induces macrophage recruitment, increased interstitial pressure, and blood vessel maturation during angiogenesis. Can initiate events that lead to a mesangial proliferative glomerulonephritis, including influx of monocytes and macrophages and production of extracellular matrix. This Homo sapiens (Human) protein is Platelet-derived growth factor D (PDGFD).